A 367-amino-acid polypeptide reads, in one-letter code: 3-dehydroquinate synthase (367 aa).

Residues aspartate 69–lysine 74, glycine 103–aspartate 107, threonine 127–threonine 128, lysine 140, and lysine 149 contribute to the NAD(+) site. Residues glutamate 182, histidine 245, and histidine 262 each coordinate Zn(2+).

It belongs to the sugar phosphate cyclases superfamily. Dehydroquinate synthase family. It depends on Co(2+) as a cofactor. Zn(2+) is required as a cofactor. The cofactor is NAD(+).

The protein localises to the cytoplasm. The catalysed reaction is 7-phospho-2-dehydro-3-deoxy-D-arabino-heptonate = 3-dehydroquinate + phosphate. The protein operates within metabolic intermediate biosynthesis; chorismate biosynthesis; chorismate from D-erythrose 4-phosphate and phosphoenolpyruvate: step 2/7. Its function is as follows. Catalyzes the conversion of 3-deoxy-D-arabino-heptulosonate 7-phosphate (DAHP) to dehydroquinate (DHQ). This Pseudomonas savastanoi pv. phaseolicola (strain 1448A / Race 6) (Pseudomonas syringae pv. phaseolicola (strain 1448A / Race 6)) protein is 3-dehydroquinate synthase.